A 121-amino-acid chain; its full sequence is Holin-like protein CidA 1 (121 aa).

Helical transmembrane passes span serine 7–alanine 24, histidine 28–valine 50, leucine 62–arginine 81, and leucine 91–leucine 113.

This sequence belongs to the CidA/LrgA family. CidA subfamily.

Its subcellular location is the cell membrane. Increases the activity of extracellular murein hydrolases possibly by mediating their export via hole formation. Inhibited by the antiholin-like proteins LrgAB. In an unstressed cell, the LrgAB products probably inhibit the function of the CidA protein. When a cell is stressed by the addition of antibiotics or by other factors in the environment, CidA possibly oligomerizes within the bacterial cell membrane, creating lesions that disrupt the proton motive force, which in turn results in loss of cell viability. These lesions are also hypothesized to regulate the subsequent cell lysis by either allowing the murein hydrolases access to the cell wall substrate and/or regulating their activity by a possible change in the cell wall pH that results from loss of membrane potential. The polypeptide is Holin-like protein CidA 1 (cidA1) (Bacillus cereus (strain ATCC 14579 / DSM 31 / CCUG 7414 / JCM 2152 / NBRC 15305 / NCIMB 9373 / NCTC 2599 / NRRL B-3711)).